The primary structure comprises 316 residues: Iron-sulfur cluster assembly SufBD family protein MJ0034 (316 aa).

Belongs to the iron-sulfur cluster assembly SufBD family.

This is Iron-sulfur cluster assembly SufBD family protein MJ0034 from Methanocaldococcus jannaschii (strain ATCC 43067 / DSM 2661 / JAL-1 / JCM 10045 / NBRC 100440) (Methanococcus jannaschii).